The chain runs to 165 residues: Small ribosomal subunit protein uS5 (165 aa).

The S5 DRBM domain occupies 10 to 73 (QIEKLISLNR…TSARKNLRFV (64 aa)).

Belongs to the universal ribosomal protein uS5 family. Part of the 30S ribosomal subunit. Contacts proteins S4 and S8.

In terms of biological role, with S4 and S12 plays an important role in translational accuracy. Functionally, located at the back of the 30S subunit body where it stabilizes the conformation of the head with respect to the body. The chain is Small ribosomal subunit protein uS5 from Borreliella burgdorferi (strain ATCC 35210 / DSM 4680 / CIP 102532 / B31) (Borrelia burgdorferi).